The primary structure comprises 161 residues: MRIEKCYFCSAPVYPGHGMMFVRNDCKVFRFCRSKCHKNFKKKRNPRKTRWTKAFRKSAGKELTVDNSLEFEKRRNTPVKYNRELWSKTVEAMRKVESIKHKRQARFIMNRLKKGKELEKAADISEVKKNIHLIKAPHAGQAKQLEDKMVQKLAEDVEMDE.

It belongs to the eukaryotic ribosomal protein eL24 family. As to quaternary structure, associated with nucleolar and cytoplasmic pre-60S particles. At the end of biogenesis it dissociates from cytoplasmic pre-60S particles and is likely to be exchanged for its ribosomal homolog, RPL24.

It localises to the nucleus. The protein resides in the nucleolus. Functionally, involved in the biogenesis of the 60S ribosomal subunit. Ensures the docking of GTPBP4/NOG1 to pre-60S particles. This chain is Probable ribosome biogenesis protein RLP24 (rsl24d1), found in Danio rerio (Zebrafish).